Reading from the N-terminus, the 160-residue chain is Small ribosomal subunit protein uS7 (160 aa).

Belongs to the universal ribosomal protein uS7 family. In terms of assembly, part of the 30S ribosomal subunit. Contacts proteins S9 and S11.

One of the primary rRNA binding proteins, it binds directly to 16S rRNA where it nucleates assembly of the head domain of the 30S subunit. Is located at the subunit interface close to the decoding center, probably blocks exit of the E-site tRNA. The chain is Small ribosomal subunit protein uS7 from Rickettsia rickettsii (strain Iowa).